A 659-amino-acid chain; its full sequence is 3-hydroxypropionyl-coenzyme A synthetase (659 aa).

Asp525 is a catalytic residue. Lys616 is modified (N6-acetyllysine).

Belongs to the ATP-dependent AMP-binding enzyme family.

It catalyses the reaction 3-hydroxypropanoate + ATP + CoA = 3-hydroxypropanoyl-CoA + AMP + diphosphate. In terms of biological role, plays a role in the autotrophic CO(2) fixation pathway. Activates 3-hydroxypropionate to its CoA ester. Can also activate propionate, and to a lesser extent acrylate, acetate and butyrate. This Sulfurisphaera tokodaii (strain DSM 16993 / JCM 10545 / NBRC 100140 / 7) (Sulfolobus tokodaii) protein is 3-hydroxypropionyl-coenzyme A synthetase.